Here is a 156-residue protein sequence, read N- to C-terminus: Putative NrdI-like protein (156 aa).

It belongs to the NrdI family.

The chain is Putative NrdI-like protein from Streptococcus pneumoniae serotype 4 (strain ATCC BAA-334 / TIGR4).